The primary structure comprises 143 residues: Large ribosomal subunit protein uL15 (143 aa).

The tract at residues Met-1–Glu-51 is disordered. Residues Arg-21–Ala-31 are compositionally biased toward gly residues.

It belongs to the universal ribosomal protein uL15 family. Part of the 50S ribosomal subunit.

Its function is as follows. Binds to the 23S rRNA. The protein is Large ribosomal subunit protein uL15 of Variovorax paradoxus (strain S110).